A 347-amino-acid polypeptide reads, in one-letter code: Protein RecA (347 aa).

66-73 (GPESSGKT) provides a ligand contact to ATP. Residues 328 to 347 (MPKPNAPKATDEALDETGTD) are disordered.

Belongs to the RecA family.

It is found in the cytoplasm. In terms of biological role, can catalyze the hydrolysis of ATP in the presence of single-stranded DNA, the ATP-dependent uptake of single-stranded DNA by duplex DNA, and the ATP-dependent hybridization of homologous single-stranded DNAs. It interacts with LexA causing its activation and leading to its autocatalytic cleavage. This is Protein RecA from Hydrogenovibrio crunogenus (strain DSM 25203 / XCL-2) (Thiomicrospira crunogena).